Consider the following 239-residue polypeptide: 1-(5-phosphoribosyl)-5-[(5-phosphoribosylamino)methylideneamino] imidazole-4-carboxamide isomerase (239 aa).

Asp-8 serves as the catalytic Proton acceptor. Residue Asp-129 is the Proton donor of the active site.

Belongs to the HisA/HisF family.

The protein localises to the cytoplasm. It catalyses the reaction 1-(5-phospho-beta-D-ribosyl)-5-[(5-phospho-beta-D-ribosylamino)methylideneamino]imidazole-4-carboxamide = 5-[(5-phospho-1-deoxy-D-ribulos-1-ylimino)methylamino]-1-(5-phospho-beta-D-ribosyl)imidazole-4-carboxamide. It functions in the pathway amino-acid biosynthesis; L-histidine biosynthesis; L-histidine from 5-phospho-alpha-D-ribose 1-diphosphate: step 4/9. This chain is 1-(5-phosphoribosyl)-5-[(5-phosphoribosylamino)methylideneamino] imidazole-4-carboxamide isomerase, found in Roseobacter denitrificans (strain ATCC 33942 / OCh 114) (Erythrobacter sp. (strain OCh 114)).